The chain runs to 724 residues: uncharacterized protein (724 aa).

4 disordered regions span residues 97–131 (RKSF…YPSP), 187–252 (ETKI…FETE), 309–434 (FETE…TSKL), and 454–473 (RGVE…VAEK). The segment covering 115-128 (TRSASYSESNNSFY) has biased composition (polar residues). The stretch at 187 to 217 (ETKIGIEEENEESEILAEEKEEEDNDFSVLE) forms a coiled coil. The span at 193-212 (EEENEESEILAEEKEEEDND) shows a compositional bias: acidic residues. Basic and acidic residues-rich tracts occupy residues 223 to 252 (QEIK…FETE) and 309 to 322 (FETE…DHSE). 2 stretches are compositionally biased toward low complexity: residues 323–333 (TTTSETDSTES) and 347–366 (SPQT…SLRS). Pro residues predominate over residues 367 to 388 (QPPPPPPSPEHKAPAPPPPPPM). The segment covering 400-410 (FSKTHSTNGDN) has biased composition (polar residues). Coiled coils occupy residues 495–522 (SYFQ…HSFQ) and 649–678 (MELA…RAKR).

This is an uncharacterized protein from Arabidopsis thaliana (Mouse-ear cress).